The primary structure comprises 537 residues: Berberine bridge enzyme-like 26 (537 aa).

The first 27 residues, 1 to 27 (MGISKPLPLFSILVLYFSLYTITPTSS), serve as a signal peptide directing secretion. A disulfide bond links Cys38 and Cys102. N-linked (GlcNAc...) asparagine glycosylation is present at Asn59. One can recognise an FAD-binding PCMH-type domain in the interval 80-256 (SMPKPGFIFS…LAWKIKLVPV (177 aa)). The segment at residues 117–181 (HDYEGLSYVS…KVHGFPAGLC (65 aa)) is a cross-link (6-(S-cysteinyl)-8alpha-(pros-histidyl)-FAD (His-Cys)). Asn306 carries an N-linked (GlcNAc...) asparagine glycan.

This sequence belongs to the oxygen-dependent FAD-linked oxidoreductase family. The cofactor is FAD. Post-translationally, the FAD cofactor is bound via a bicovalent 6-S-cysteinyl, 8alpha-N1-histidyl FAD linkage.

It localises to the secreted. The protein resides in the cell wall. In Arabidopsis thaliana (Mouse-ear cress), this protein is Berberine bridge enzyme-like 26.